Reading from the N-terminus, the 316-residue chain is Ribosomal RNA small subunit methyltransferase H (316 aa).

S-adenosyl-L-methionine contacts are provided by residues 35 to 37 (AGH), D55, F84, D105, and Q112.

This sequence belongs to the methyltransferase superfamily. RsmH family.

Its subcellular location is the cytoplasm. It catalyses the reaction cytidine(1402) in 16S rRNA + S-adenosyl-L-methionine = N(4)-methylcytidine(1402) in 16S rRNA + S-adenosyl-L-homocysteine + H(+). Specifically methylates the N4 position of cytidine in position 1402 (C1402) of 16S rRNA. This chain is Ribosomal RNA small subunit methyltransferase H, found in Streptococcus pneumoniae (strain JJA).